Reading from the N-terminus, the 382-residue chain is Manganese peroxidase H4 (382 aa).

The first 24 residues, 1–24, serve as a signal peptide directing secretion; that stretch reads MAFGSLLAFVALAAITRAAPTAES. Cystine bridges form between cysteine 27–cysteine 39, cysteine 38–cysteine 313, cysteine 57–cysteine 141, cysteine 277–cysteine 344, and cysteine 366–cysteine 373. Mn(2+) contacts are provided by glutamate 59 and glutamate 63. The Proton acceptor role is filled by histidine 70. Ca(2+)-binding residues include aspartate 71, glycine 86, aspartate 88, and serine 90. N-linked (GlcNAc...) asparagine glycosylation is found at asparagine 100 and asparagine 155. Histidine 197 contacts heme b. Ca(2+) is bound at residue threonine 198. Position 203 (aspartate 203) interacts with Mn(2+). Positions 215, 217, 220, and 222 each coordinate Ca(2+). Asparagine 241 is a glycosylation site (N-linked (GlcNAc...) asparagine).

This sequence belongs to the peroxidase family. Ligninase subfamily. It depends on heme b as a cofactor. Requires Ca(2+) as cofactor.

The protein resides in the secreted. The catalysed reaction is 2 Mn(2+) + H2O2 + 2 H(+) = 2 Mn(3+) + 2 H2O. Functionally, catalyzes the oxidation of Mn(2+) to Mn(3+). The latter, acting as a diffusible redox mediator, is capable of oxidizing a variety of lignin compounds. The polypeptide is Manganese peroxidase H4 (Phanerodontia chrysosporium (White-rot fungus)).